Reading from the N-terminus, the 713-residue chain is MARRADSFCLISCVLVSFVISVSAVTDDSQDKQVYVVYMGSLPSSRLEYTPMSHHMSILQEVTGESSVEGRLVRSYKRSFNGFAARLTESERERVAEMEGVVSVFPDINYKLQTTASWDFLGLKEGKNTKRNLAIESDTIIGFIDSGIWPESESFSDKGFGPPPKKWKGVCSAGKNFTCNNKLIGARDYTNEGTRDIEGHGTHTASTAAGNAVKNTSFYGIGNGTARGGVPASRIAAYKACSEMGCTTESVLSAFDDAIADGVDLISISLGANLVRTYETDPIAIGAFHAMVKGILTVQSAGNGGPNPGSVMSVAPWILTVAASNTNRGFVTKVVLGNGKTFVGKSLNAFDLKGKNYPLYGGSTDGPLLRGKILVSEDKVSSEIVVANINENYHDYAYVSILPSSALSKDDFDSVISYVNSTKSPHGTVLKSEAIFNQAAPKVAGFSSRGPNTIAVDILKPDVTAPGVEILAAFSPLNSPAQDKRDNRHVKYSVLSGTSMSCPHVAGVAAYIKTFHPEWSPSMIQSAIMTTAWPMNATGTAVASTEFAYGAGHVDPIAAINPGLVYEIGKSDHIAFLCGLNYNATSLKLIAGEAVTCTGKTLPRNLNYPSMSAKLPKSESSFIVTFNRTVTNVGTPNSTYKSKIVLNHGSNLKVEVSPSVLSMKSVKEKQSFTVTVSGSNIDPKLPSSANLIWSDGTHNVRSPIVVYTYSVSD.

A signal peptide spans 1-24; it reads MARRADSFCLISCVLVSFVISVSA. A propeptide spans 25–113 (activation peptide); that stretch reads VTDDSQDKQV…VFPDINYKLQ (89 aa). Residues 34 to 112 enclose the Inhibitor I9 domain; it reads VYVVYMGSLP…SVFPDINYKL (79 aa). The Peptidase S8 domain maps to 117 to 560; the sequence is SWDFLGLKEG…AGHVDPIAAI (444 aa). The active-site Charge relay system is aspartate 145. The N-linked (GlcNAc...) asparagine glycan is linked to asparagine 176. Histidine 200 functions as the Charge relay system in the catalytic mechanism. N-linked (GlcNAc...) asparagine glycosylation is found at asparagine 215 and asparagine 223. The 60-residue stretch at 356–415 folds into the PA domain; that stretch reads NYPLYGGSTDGPLLRGKILVSEDKVSSEIVVANINENYHDYAYVSILPSSALSKDDFDSV. Asparagine 420 is a glycosylation site (N-linked (GlcNAc...) asparagine). Residue serine 499 is the Charge relay system of the active site. Residues asparagine 536, asparagine 583, asparagine 627, and asparagine 637 are each glycosylated (N-linked (GlcNAc...) asparagine).

It belongs to the peptidase S8 family. The C-terminal propeptide is autocleaved.

It localises to the secreted. The polypeptide is Subtilisin-like protease SBT4.9 (Arabidopsis thaliana (Mouse-ear cress)).